The chain runs to 458 residues: Transmembrane protein 143 (458 aa).

The next 2 helical transmembrane spans lie at 277–297 (LLNLMLVVSGVMIFVNVGMVI) and 298–318 (LSDLKMATSLLLLLFAAFMGV). At serine 329 the chain carries Phosphoserine.

The protein resides in the membrane. This Mus musculus (Mouse) protein is Transmembrane protein 143 (Tmem143).